The following is a 424-amino-acid chain: Gamma-glutamyl phosphate reductase (424 aa).

It belongs to the gamma-glutamyl phosphate reductase family.

It is found in the cytoplasm. The enzyme catalyses L-glutamate 5-semialdehyde + phosphate + NADP(+) = L-glutamyl 5-phosphate + NADPH + H(+). It participates in amino-acid biosynthesis; L-proline biosynthesis; L-glutamate 5-semialdehyde from L-glutamate: step 2/2. Its function is as follows. Catalyzes the NADPH-dependent reduction of L-glutamate 5-phosphate into L-glutamate 5-semialdehyde and phosphate. The product spontaneously undergoes cyclization to form 1-pyrroline-5-carboxylate. The protein is Gamma-glutamyl phosphate reductase of Parvibaculum lavamentivorans (strain DS-1 / DSM 13023 / NCIMB 13966).